Consider the following 170-residue polypeptide: Extracellular globin-3 (170 aa).

A signal peptide spans 1–17 (MLRQLLVLVGLAVVCLA). The Globin domain maps to 23-169 (CCSEEDHRIV…ILTKISSRLN (147 aa)). Residues Cys-24 and Cys-156 are joined by a disulfide bond. His-119 serves as a coordination point for heme b.

This sequence belongs to the globin family. The extracellular hemoglobin of the earthworm consists of 12 subunits that have a hexagonal bilayer structure with a molecular weight near 3.8 million. Each one-twelfth subunit is composed primarily of disulfide linked trimers (chains A, B, and C) and monomers (chain D).

The protein localises to the secreted. This Lumbricus terrestris (Common earthworm) protein is Extracellular globin-3.